The sequence spans 233 residues: Pathogenesis-related thaumatin-like protein 3.2 (233 aa).

Positions 1 to 22 are cleaved as a signal peptide; sequence MARAMHTVWIALVPTLFVFLQG. Disulfide bonds link cysteine 36–cysteine 232, cysteine 77–cysteine 87, cysteine 92–cysteine 98, cysteine 145–cysteine 221, cysteine 151–cysteine 204, cysteine 159–cysteine 169, cysteine 173–cysteine 182, and cysteine 183–cysteine 191. Asparagine 195 carries N-linked (GlcNAc...) asparagine glycosylation.

Belongs to the thaumatin family. In terms of tissue distribution, strongly expressed in roots and in female and male strobili, and, to a lower extent, in cotyledons, leaves, stems and pollen grains.

Functionally, may be involved in disease resistance. The sequence is that of Pathogenesis-related thaumatin-like protein 3.2 from Cryptomeria japonica (Japanese cedar).